Here is a 363-residue protein sequence, read N- to C-terminus: Cytochrome P450 CYP82D47 (363 aa).

Cys342 serves as a coordination point for heme.

This sequence belongs to the cytochrome P450 family. Requires heme as cofactor.

Its function is as follows. Probable heme-thiolate monooxygenase. In Panax ginseng (Korean ginseng), this protein is Cytochrome P450 CYP82D47.